A 338-amino-acid chain; its full sequence is Cytochrome c biogenesis protein CcsA (338 aa).

8 helical membrane-spanning segments follow: residues 15-35 (FLVL…PNIP), 36-56 (GLTG…ATLL), 71-91 (LYES…VAEW), 97-117 (WVGV…ALSL), 142-162 (VMMI…AFLI), 246-266 (IIGL…VWAN), 273-293 (WSWD…AAYL), and 307-327 (AFLA…VNIL).

The protein belongs to the CcmF/CycK/Ccl1/NrfE/CcsA family. As to quaternary structure, may interact with ccs1.

Its subcellular location is the cellular thylakoid membrane. In terms of biological role, required during biogenesis of c-type cytochromes (cytochrome c6 and cytochrome f) at the step of heme attachment. This is Cytochrome c biogenesis protein CcsA from Picosynechococcus sp. (strain ATCC 27264 / PCC 7002 / PR-6) (Agmenellum quadruplicatum).